Reading from the N-terminus, the 196-residue chain is Probable malonic semialdehyde reductase RutE (196 aa).

It belongs to the nitroreductase family. HadB/RutE subfamily. FMN is required as a cofactor.

The enzyme catalyses 3-hydroxypropanoate + NADP(+) = 3-oxopropanoate + NADPH + H(+). Functionally, may reduce toxic product malonic semialdehyde to 3-hydroxypropionic acid, which is excreted. This chain is Probable malonic semialdehyde reductase RutE, found in Escherichia coli O139:H28 (strain E24377A / ETEC).